A 224-amino-acid chain; its full sequence is Ribonuclease HII (224 aa).

The RNase H type-2 domain maps to 1 to 210 (MKLGGIDEAG…LKKIEEKLQK (210 aa)). 3 residues coordinate a divalent metal cation: aspartate 7, glutamate 8, and aspartate 105.

The protein belongs to the RNase HII family. Mn(2+) is required as a cofactor. Requires Mg(2+) as cofactor.

Its subcellular location is the cytoplasm. It carries out the reaction Endonucleolytic cleavage to 5'-phosphomonoester.. In terms of biological role, endonuclease that specifically degrades the RNA of RNA-DNA hybrids. This Thermococcus sibiricus (strain DSM 12597 / MM 739) protein is Ribonuclease HII.